The following is a 462-amino-acid chain: MDNGMFSGFIMIKNLLLFCISMNLSSHFGFSQMPTSSVKDETNDNITIFTRILDGLLDGYDNRLRPGLGERITQVRTDIYVTSFGPVSDTEMEYTIDVFFRQSWKDERLRFKGPMQRLPLNNLLASKIWTPDTFFHNGKKSIAHNMTTPNKLLRLEDDGTLLYTMRLTISAECPMQLEDFPMDAHACPLKFGSYAYPNSEVVYVWTNGSTKSVVVAEDGSRLNQYHLMGQTVGTENISTSTGEYTIMTAHFHLKRKIGYFVIQTYLPCIMTVILSQVSFWLNRESVPARTVFGVTTVLTMTTLSISARNSLPKVAYATAMDWFIAVCYAFVFSALIEFATVNYFTKRGWAWDGKKALEAAKIKKKREVILNKSTNAFTTGKMSHPPNIPKEQTPAGTSNTTSVSVKPSEEKTSESKKTYNSISKIDKMSRIVFPVLFGTFNLVYWATYLNREPVIKGAASPK.

Positions 1–31 (MDNGMFSGFIMIKNLLLFCISMNLSSHFGFS) are cleaved as a signal peptide. The Extracellular segment spans residues 32–260 (QMPTSSVKDE…FHLKRKIGYF (229 aa)). A glycan (N-linked (GlcNAc...) asparagine) is linked at Asn-45. Arg-101 contributes to the 4-aminobutanoate binding site. N-linked (GlcNAc...) asparagine glycosylation is present at Asn-145. Position 164 (Thr-164) interacts with 4-aminobutanoate. An intrachain disulfide couples Cys-173 to Cys-187. Residues Asn-207 and Asn-236 are each glycosylated (N-linked (GlcNAc...) asparagine). Residues 261-281 (VIQTYLPCIMTVILSQVSFWL) form a helical membrane-spanning segment. Residues 282–286 (NRESV) lie on the Cytoplasmic side of the membrane. Residues 287–308 (PARTVFGVTTVLTMTTLSISAR) form a helical membrane-spanning segment. The Extracellular segment spans residues 309-318 (NSLPKVAYAT). A helical transmembrane segment spans residues 319–340 (AMDWFIAVCYAFVFSALIEFAT). At 341–427 (VNYFTKRGWA…TYNSISKIDK (87 aa)) the chain is on the cytoplasmic side. Residue Lys-355 forms a Glycyl lysine isopeptide (Lys-Gly) (interchain with G-Cter in ubiquitin) linkage. A disordered region spans residues 377–412 (FTTGKMSHPPNIPKEQTPAGTSNTTSVSVKPSEEKT). A helical transmembrane segment spans residues 428 to 448 (MSRIVFPVLFGTFNLVYWATY). At 449-462 (LNREPVIKGAASPK) the chain is on the extracellular side.

The protein belongs to the ligand-gated ion channel (TC 1.A.9) family. Gamma-aminobutyric acid receptor (TC 1.A.9.5) subfamily. GABRA5 sub-subfamily. Heteropentamer, formed by a combination of alpha (GABRA1-6), beta (GABRB1-3), gamma (GABRG1-3), delta (GABRD), epsilon (GABRE), rho (GABRR1-3), pi (GABRP) and theta (GABRQ) chains, each subunit exhibiting distinct physiological and pharmacological properties.

The protein localises to the postsynaptic cell membrane. Its subcellular location is the cell membrane. The enzyme catalyses chloride(in) = chloride(out). Its function is as follows. Alpha subunit of the heteropentameric ligand-gated chloride channel gated by gamma-aminobutyric acid (GABA), a major inhibitory neurotransmitter in the brain. GABA-gated chloride channels, also named GABA(A) receptors (GABAAR), consist of five subunits arranged around a central pore and contain GABA active binding site(s) located at the alpha and beta subunit interface(s). When activated by GABA, GABAARs selectively allow the flow of chloride anions across the cell membrane down their electrochemical gradient. GABAARs containing alpha-5/GABRA5 subunits are mainly extrasynaptic and contribute to the tonic GABAergic inhibition in the hippocampus. Extrasynaptic alpha-5-containing GABAARs in CA1 pyramidal neurons play a role in learning and memory processes. The sequence is that of Gamma-aminobutyric acid receptor subunit alpha-5 from Homo sapiens (Human).